Consider the following 325-residue polypeptide: Golgi to ER traffic protein 4 homolog B (325 aa).

2 disordered regions span residues 1–22 (MAAAMAEQEGSKGSARNRGGVQ) and 306–325 (SGEDDDVEDGQEDSSPIELD). Residues 307–317 (GEDDDVEDGQE) show a composition bias toward acidic residues.

The protein belongs to the GET4 family. As to quaternary structure, component of the bag6/bat3 complex.

It is found in the cytoplasm. The protein localises to the cytosol. Its function is as follows. As part of a cytosolic protein quality control complex, the bag6/bat3 complex, maintains misfolded and hydrophobic patches-containing proteins in a soluble state and participates in their proper delivery to the endoplasmic reticulum or alternatively can promote their sorting to the proteasome where they undergo degradation. The bag6/bat3 complex is involved in the post-translational delivery of tail-anchored/type II transmembrane proteins to the endoplasmic reticulum membrane. Similarly, the bag6/bat3 complex also functions as a sorting platform for proteins of the secretory pathway that are mislocalized to the cytosol either delivering them to the proteasome for degradation or to the endoplasmic reticulum. The bag6/bat3 complex also plays a role in the endoplasmic reticulum-associated degradation (ERAD), a quality control mechanism that eliminates unwanted proteins of the endoplasmic reticulum through their retrotranslocation to the cytosol and their targeting to the proteasome. It maintains these retrotranslocated proteins in an unfolded yet soluble state condition in the cytosol to ensure their proper delivery to the proteasome. The sequence is that of Golgi to ER traffic protein 4 homolog B (get4-b) from Xenopus laevis (African clawed frog).